The sequence spans 170 residues: Small ribosomal subunit protein uS15 (170 aa).

A compositionally biased stretch (basic residues) spans 1–10; that stretch reads MARMHSRKKG. Positions 1-20 are disordered; it reads MARMHSRKKGSSGSRPPVVD.

The protein belongs to the universal ribosomal protein uS15 family. In terms of assembly, part of the 30S ribosomal subunit.

The polypeptide is Small ribosomal subunit protein uS15 (Methanothrix thermoacetophila (strain DSM 6194 / JCM 14653 / NBRC 101360 / PT) (Methanosaeta thermophila)).